The sequence spans 115 residues: Large ribosomal subunit protein bL19 (115 aa).

Belongs to the bacterial ribosomal protein bL19 family.

Functionally, this protein is located at the 30S-50S ribosomal subunit interface and may play a role in the structure and function of the aminoacyl-tRNA binding site. The sequence is that of Large ribosomal subunit protein bL19 from Clostridium perfringens (strain ATCC 13124 / DSM 756 / JCM 1290 / NCIMB 6125 / NCTC 8237 / Type A).